A 1242-amino-acid chain; its full sequence is Phosphorylase b kinase regulatory subunit alpha, skeletal muscle isoform (1242 aa).

S630, S731, S737, S740, S760, S813, S974, S983, and S987 each carry phosphoserine. Residues 812-842 (LSELYVKVGEIRHWGLIRYISGILRKKVEAL) are calmodulin-binding. Position 1009 is a phosphoserine; by autocatalysis (S1009). S1020 carries the phosphoserine; by PKA modification. Phosphoserine is present on residues S1022 and S1025. The segment at 1065-1105 (SKDSRQGQWQRRRRLDGALNRVPIGFYQKVWKILQKCHGLS) is calmodulin-binding. Position 1132 is a phosphoserine (S1132). C1239 carries the S-farnesyl cysteine lipid modification.

It belongs to the phosphorylase b kinase regulatory chain family. As to quaternary structure, hexadecamer of 4 heterotetramers, each composed of alpha, beta, gamma, and delta subunits. Alpha (PHKA1 or PHKA2) and beta (PHKB) are regulatory subunits, gamma (PHKG1 or PHKG2) is the catalytic subunit, and delta is calmodulin. Post-translationally, although the final Cys may be farnesylated, the terminal tripeptide is probably not removed, and the C-terminus is not methylated.

It localises to the cell membrane. It participates in glycan biosynthesis; glycogen metabolism. Its activity is regulated as follows. By phosphorylation of various serine residues and by calcium. Phosphorylase b kinase catalyzes the phosphorylation of serine in certain substrates, including troponin I. The alpha chain may bind calmodulin. This chain is Phosphorylase b kinase regulatory subunit alpha, skeletal muscle isoform (Phka1), found in Rattus norvegicus (Rat).